A 205-amino-acid polypeptide reads, in one-letter code: Large ribosomal subunit protein uL4 (205 aa).

Residues Arg43–Asn95 are disordered. A compositionally biased stretch (basic and acidic residues) spans Ala48–His57. Over residues Ser58–Gly69 the composition is skewed to basic residues.

The protein belongs to the universal ribosomal protein uL4 family. As to quaternary structure, part of the 50S ribosomal subunit.

In terms of biological role, one of the primary rRNA binding proteins, this protein initially binds near the 5'-end of the 23S rRNA. It is important during the early stages of 50S assembly. It makes multiple contacts with different domains of the 23S rRNA in the assembled 50S subunit and ribosome. Forms part of the polypeptide exit tunnel. In Bordetella bronchiseptica (strain ATCC BAA-588 / NCTC 13252 / RB50) (Alcaligenes bronchisepticus), this protein is Large ribosomal subunit protein uL4.